The primary structure comprises 691 residues: MARAFPLERVRNIGIAAHIDAGKTTCTERILFYSGVVHKMGEVHDGAAVTDWMAQERERGITITAAAISTTWDDHRINIIDTPGHVDFTIEVERSMRVLDGVIAVFCAVGGVQPQSETVWRQADRYSVPRMVFVNKMDRTGADFLKVHGQIKDRLKANAVPIQLPIGAENDLKGIIDLVENKAYIYKDDLGKDIEQTEVPSDMVDLVSDWRLKLMESIAETEEELLEAFLENGELTIEQLKSGIREGVLKHGLVPMLCGSAFKNKGVQLLLDAVVNYLPAPVDVPPIQGLLPNGKEAVRPSDDGAPFSALAFKVMADPYGKLTFVRMYSGVLEKGSYVLNSTKDAKERISRLIILKADDREEVDELRAGDLGAVLGLKNTTTGDTLCASEEAIVLETLYIPEPVISVAVEPKTKSDMEKLGKALTSLSEEDPTFRVSTDQETNQTVIAGMGELHLEILVDRMLREFKVEANIGAPQVSYRETIRASSSGEGKFARQTGGKGQYGHVVIEVEPGEPGTGFEFVNKIVGGSVPKEYIKPAESGMRETCESGVIAGYPLIDVKVTLVDGSYHDVDSSEMAFKIAGSMAFKDGIKKCNPVLLEPMMKVEVEVPEDFLGSIIGDLSSRRGQVEGQSIEDGQSKVQSKVPLAEMFGYATQLRSMTQGRGIFSMEFSTYEEVPRNVAEAIISKNQGNS.

The tr-type G domain maps to 8-282 (ERVRNIGIAA…AVVNYLPAPV (275 aa)). Residues 17-24 (AHIDAGKT), 81-85 (DTPGH), and 135-138 (NKMD) each bind GTP.

The protein belongs to the TRAFAC class translation factor GTPase superfamily. Classic translation factor GTPase family. EF-G/EF-2 subfamily.

It localises to the cytoplasm. Its function is as follows. Catalyzes the GTP-dependent ribosomal translocation step during translation elongation. During this step, the ribosome changes from the pre-translocational (PRE) to the post-translocational (POST) state as the newly formed A-site-bound peptidyl-tRNA and P-site-bound deacylated tRNA move to the P and E sites, respectively. Catalyzes the coordinated movement of the two tRNA molecules, the mRNA and conformational changes in the ribosome. The protein is Elongation factor G of Prochlorococcus marinus (strain NATL1A).